A 261-amino-acid polypeptide reads, in one-letter code: Cytochrome c oxidase subunit 3 (261 aa).

Topologically, residues 2–15 are mitochondrial matrix; sequence THQTHAYHMVNPSP. The helical transmembrane segment at 16–34 threads the bilayer; the sequence is WPLTGALSALLLTSGLVMW. The Mitochondrial intermembrane segment spans residues 35 to 40; the sequence is FHYNST. The helical transmembrane segment at 41–66 threads the bilayer; that stretch reads ILLSLGLLTNILTMYQWWRDIIREGT. The Mitochondrial matrix segment spans residues 67–72; that stretch reads YQGHHT. The helical transmembrane segment at 73 to 105 threads the bilayer; it reads PIVQKGLRYGMILFIVSEVFFFAGFFWAFYHSS. The Mitochondrial intermembrane portion of the chain corresponds to 106–128; that stretch reads LVPTHDLGGCWPPTGITPLNPLE. A helical transmembrane segment spans residues 129–152; that stretch reads VPLLNTSVLLASGVSITWAHHSLM. Residues 153 to 155 lie on the Mitochondrial matrix side of the membrane; it reads EGN. A helical transmembrane segment spans residues 156–183; that stretch reads RNHMNQALLITILLGLYFTILQASEYFE. The Mitochondrial intermembrane segment spans residues 184-190; that stretch reads TSFSISD. A helical transmembrane segment spans residues 191 to 223; the sequence is GIYGSTFFMATGFHGLHVIIGSTFLIVCLLRQL. Topologically, residues 224 to 232 are mitochondrial matrix; that stretch reads KFHFTSKHH. The helical transmembrane segment at 233-256 threads the bilayer; sequence FGFEAAAWYWHFVDVVWLFLYVSI. Over 257-261 the chain is Mitochondrial intermembrane; that stretch reads YWWGS.

It belongs to the cytochrome c oxidase subunit 3 family. As to quaternary structure, component of the cytochrome c oxidase (complex IV, CIV), a multisubunit enzyme composed of 14 subunits. The complex is composed of a catalytic core of 3 subunits MT-CO1, MT-CO2 and MT-CO3, encoded in the mitochondrial DNA, and 11 supernumerary subunits COX4I, COX5A, COX5B, COX6A, COX6B, COX6C, COX7A, COX7B, COX7C, COX8 and NDUFA4, which are encoded in the nuclear genome. The complex exists as a monomer or a dimer and forms supercomplexes (SCs) in the inner mitochondrial membrane with NADH-ubiquinone oxidoreductase (complex I, CI) and ubiquinol-cytochrome c oxidoreductase (cytochrome b-c1 complex, complex III, CIII), resulting in different assemblies (supercomplex SCI(1)III(2)IV(1) and megacomplex MCI(2)III(2)IV(2)).

It localises to the mitochondrion inner membrane. The catalysed reaction is 4 Fe(II)-[cytochrome c] + O2 + 8 H(+)(in) = 4 Fe(III)-[cytochrome c] + 2 H2O + 4 H(+)(out). In terms of biological role, component of the cytochrome c oxidase, the last enzyme in the mitochondrial electron transport chain which drives oxidative phosphorylation. The respiratory chain contains 3 multisubunit complexes succinate dehydrogenase (complex II, CII), ubiquinol-cytochrome c oxidoreductase (cytochrome b-c1 complex, complex III, CIII) and cytochrome c oxidase (complex IV, CIV), that cooperate to transfer electrons derived from NADH and succinate to molecular oxygen, creating an electrochemical gradient over the inner membrane that drives transmembrane transport and the ATP synthase. Cytochrome c oxidase is the component of the respiratory chain that catalyzes the reduction of oxygen to water. Electrons originating from reduced cytochrome c in the intermembrane space (IMS) are transferred via the dinuclear copper A center (CU(A)) of subunit 2 and heme A of subunit 1 to the active site in subunit 1, a binuclear center (BNC) formed by heme A3 and copper B (CU(B)). The BNC reduces molecular oxygen to 2 water molecules using 4 electrons from cytochrome c in the IMS and 4 protons from the mitochondrial matrix. The polypeptide is Cytochrome c oxidase subunit 3 (Rattus norvegicus (Rat)).